The sequence spans 128 residues: MSFIKEFREFAMRGNVVDMAVGVIIGGAFGKIVSSLVGDVVMPVLGILTGGVDFKDMKMVLAEAVGETPAVTLNYGMFIQNVFDFIIIAFAIFLMIKAINKLKKPAEEAPKGPSQEELLAEIRDLLKK.

Transmembrane regions (helical) follow at residues Phe-10–Gly-30 and Gly-76–Ile-96.

Belongs to the MscL family. In terms of assembly, homopentamer.

Its subcellular location is the cell inner membrane. Its function is as follows. Channel that opens in response to stretch forces in the membrane lipid bilayer. May participate in the regulation of osmotic pressure changes within the cell. In Actinobacillus succinogenes (strain ATCC 55618 / DSM 22257 / CCUG 43843 / 130Z), this protein is Large-conductance mechanosensitive channel.